The sequence spans 690 residues: Eukaryotic translation initiation factor 3 subunit B (690 aa).

Residues 1-11 are compositionally biased toward basic and acidic residues; sequence MAKKKSEEHSG. Residues 1-33 are disordered; it reads MAKKKSEEHSGTDANDSDYQEEPNFDDPPGFVD. The segment covering 15-25 has biased composition (acidic residues); that stretch reads NDSDYQEEPNF. One can recognise an RRM domain in the interval 57–141; sequence SVVVVDNIPK…HTFAVNLFTD (85 aa). WD repeat units follow at residues 207-246, 293-331, 334-369, 442-484, and 530-575; these read TRERFTDTFVKWSPLGTYVVTFHKPGVAIWGGSSFQKIQK, DGMSVLSMFRWSHDDKFVARMGENSIHIYETPSFYLLDL, IKIPGIRGFSWSPTDNVIAYWVEEQNQIPARVTLME, EIRE…KPSL, and PDHF…IKRT. Residues 595 to 645 are a coiled coil; sequence EEKQKEIKKNLKKYYAAFEQKDRLRLTRASKELLEKRSQLRETFMEYRNKR.

Belongs to the eIF-3 subunit B family. In terms of assembly, component of the eukaryotic translation initiation factor 3 (eIF-3) complex. The eIF-3 complex interacts with pix. Interacts with mxt.

The protein resides in the cytoplasm. In terms of biological role, RNA-binding component of the eukaryotic translation initiation factor 3 (eIF-3) complex, which is involved in protein synthesis of a specialized repertoire of mRNAs and, together with other initiation factors, stimulates binding of mRNA and methionyl-tRNAi to the 40S ribosome. The eIF-3 complex specifically targets and initiates translation of a subset of mRNAs involved in cell proliferation. The protein is Eukaryotic translation initiation factor 3 subunit B of Drosophila melanogaster (Fruit fly).